A 599-amino-acid chain; its full sequence is Proteasome-associated ATPase (599 aa).

The tract at residues 1 to 22 (MPHGHPGSQPDEGGELSNGSSS) is disordered. Residues 21-97 (SSGELTAQIR…LREEVDRLAQ (77 aa)) adopt a coiled-coil conformation. 286–291 (GCGKTL) lines the ATP pocket. Positions 598–599 (YL) are docks into pockets in the proteasome alpha-ring.

The protein belongs to the AAA ATPase family. In terms of assembly, homohexamer. Assembles into a hexameric ring structure that caps the 20S proteasome core. Strongly interacts with the prokaryotic ubiquitin-like protein Pup through a hydrophobic interface; the interacting region of ARC lies in its N-terminal coiled-coil domain. There is one Pup binding site per ARC hexamer ring. Upon ATP-binding, the C-terminus of ARC interacts with the alpha-rings of the proteasome core, possibly by binding to the intersubunit pockets.

It participates in protein degradation; proteasomal Pup-dependent pathway. Its function is as follows. ATPase which is responsible for recognizing, binding, unfolding and translocation of pupylated proteins into the bacterial 20S proteasome core particle. May be essential for opening the gate of the 20S proteasome via an interaction with its C-terminus, thereby allowing substrate entry and access to the site of proteolysis. Thus, the C-termini of the proteasomal ATPase may function like a 'key in a lock' to induce gate opening and therefore regulate proteolysis. This is Proteasome-associated ATPase from Actinosynnema mirum (strain ATCC 29888 / DSM 43827 / JCM 3225 / NBRC 14064 / NCIMB 13271 / NRRL B-12336 / IMRU 3971 / 101).